The sequence spans 617 residues: Chaperone protein HscA homolog (617 aa).

Residues 1 to 23 (MALLQIAEPGQSSAPHEHKRAAG) form a disordered region.

Belongs to the heat shock protein 70 family.

In terms of biological role, chaperone involved in the maturation of iron-sulfur cluster-containing proteins. Has a low intrinsic ATPase activity which is markedly stimulated by HscB. The protein is Chaperone protein HscA homolog of Vibrio vulnificus (strain YJ016).